The chain runs to 431 residues: tRNA(Ile)-lysidine synthase (431 aa).

Residue 25–30 coordinates ATP; it reads SGGLDS.

This sequence belongs to the tRNA(Ile)-lysidine synthase family.

The protein resides in the cytoplasm. It catalyses the reaction cytidine(34) in tRNA(Ile2) + L-lysine + ATP = lysidine(34) in tRNA(Ile2) + AMP + diphosphate + H(+). Ligates lysine onto the cytidine present at position 34 of the AUA codon-specific tRNA(Ile) that contains the anticodon CAU, in an ATP-dependent manner. Cytidine is converted to lysidine, thus changing the amino acid specificity of the tRNA from methionine to isoleucine. The chain is tRNA(Ile)-lysidine synthase from Legionella pneumophila (strain Paris).